The chain runs to 379 residues: Queuine tRNA-ribosyltransferase (379 aa).

Aspartate 94 (proton acceptor) is an active-site residue. Residues 94-98, aspartate 148, glutamine 191, and glycine 218 each bind substrate; that span reads DSGGF. The segment at 249–255 is RNA binding; sequence GVGSPDS. Aspartate 268 serves as the catalytic Nucleophile. The interval 273-277 is RNA binding; important for wobble base 34 recognition; the sequence is TRIAR. Zn(2+)-binding residues include cysteine 306, cysteine 308, cysteine 311, and histidine 337.

This sequence belongs to the queuine tRNA-ribosyltransferase family. Homodimer. Within each dimer, one monomer is responsible for RNA recognition and catalysis, while the other monomer binds to the replacement base PreQ1. Zn(2+) serves as cofactor.

It catalyses the reaction 7-aminomethyl-7-carbaguanine + guanosine(34) in tRNA = 7-aminomethyl-7-carbaguanosine(34) in tRNA + guanine. The protein operates within tRNA modification; tRNA-queuosine biosynthesis. In terms of biological role, catalyzes the base-exchange of a guanine (G) residue with the queuine precursor 7-aminomethyl-7-deazaguanine (PreQ1) at position 34 (anticodon wobble position) in tRNAs with GU(N) anticodons (tRNA-Asp, -Asn, -His and -Tyr). Catalysis occurs through a double-displacement mechanism. The nucleophile active site attacks the C1' of nucleotide 34 to detach the guanine base from the RNA, forming a covalent enzyme-RNA intermediate. The proton acceptor active site deprotonates the incoming PreQ1, allowing a nucleophilic attack on the C1' of the ribose to form the product. After dissociation, two additional enzymatic reactions on the tRNA convert PreQ1 to queuine (Q), resulting in the hypermodified nucleoside queuosine (7-(((4,5-cis-dihydroxy-2-cyclopenten-1-yl)amino)methyl)-7-deazaguanosine). In Bacillus cereus (strain Q1), this protein is Queuine tRNA-ribosyltransferase.